A 316-amino-acid polypeptide reads, in one-letter code: Ribosomal RNA small subunit methyltransferase H (316 aa).

S-adenosyl-L-methionine is bound by residues 35–37 (GGH), Asp55, Phe79, Asp101, and Gln108.

Belongs to the methyltransferase superfamily. RsmH family.

Its subcellular location is the cytoplasm. The enzyme catalyses cytidine(1402) in 16S rRNA + S-adenosyl-L-methionine = N(4)-methylcytidine(1402) in 16S rRNA + S-adenosyl-L-homocysteine + H(+). Its function is as follows. Specifically methylates the N4 position of cytidine in position 1402 (C1402) of 16S rRNA. The chain is Ribosomal RNA small subunit methyltransferase H from Vibrio campbellii (strain ATCC BAA-1116).